The following is a 142-amino-acid chain: Hemoglobin subunit alpha (142 aa).

The Globin domain occupies 2–142 (KLSAEDKHNV…VGHVLTSKYR (141 aa)). O2 is bound at residue His59. His88 contributes to the heme b binding site.

It belongs to the globin family. In terms of assembly, heterotetramer of two alpha chains and two beta chains. As to expression, red blood cells.

Involved in oxygen transport from the lung to the various peripheral tissues. This chain is Hemoglobin subunit alpha (HBA), found in Taricha granulosa (Roughskin newt).